We begin with the raw amino-acid sequence, 603 residues long: NADH-ubiquinone oxidoreductase chain 5 (603 aa).

The next 15 helical transmembrane spans lie at 38–58 (SIVASTFIISLFPTTMFMCLD), 87–107 (MMFIPVALFVTWSIMEFSLWY), 122–142 (LIFLITMLILVTANNLFQLFI), 144–160 (WEGVGIMSFLLISWWYA), 171–191 (AILYNRIGDIGFILALAWFIL), 211–233 (TPLLGLLLAAAGKSAQLGLHPWL), 241–261 (TPVSALLHSSTMVVAGIFLLI), 272–292 (LIQTLTLCLGAITTLFAAVCA), 301–320 (IVAFSTSSQLGLMMVTIGIN), 325–347 (AFLHICTHAFFKAMLFMCSGSII), 370–390 (STSLTIGSLALAGMPFLTGFY), 407–429 (WALSITLIATSLTSAYSTRMILL), 458–478 (AAGSLFAGFLITNNISPASPF), 482–502 (IPLYLKLTALAVTFLGLLTAL), and 582–602 (GMIKLYFLSFFFPLILTLLLI).

Belongs to the complex I subunit 5 family. Core subunit of respiratory chain NADH dehydrogenase (Complex I) which is composed of 45 different subunits.

Its subcellular location is the mitochondrion inner membrane. It catalyses the reaction a ubiquinone + NADH + 5 H(+)(in) = a ubiquinol + NAD(+) + 4 H(+)(out). Core subunit of the mitochondrial membrane respiratory chain NADH dehydrogenase (Complex I) which catalyzes electron transfer from NADH through the respiratory chain, using ubiquinone as an electron acceptor. Essential for the catalytic activity and assembly of complex I. The protein is NADH-ubiquinone oxidoreductase chain 5 (MT-ND5) of Homo sapiens (Human).